The chain runs to 427 residues: Peptidase B (427 aa).

Mn(2+) contacts are provided by Lys195 and Asp200. Residue Lys207 is part of the active site. Asp218, Asp277, and Glu279 together coordinate Mn(2+). The active site involves Arg281.

It belongs to the peptidase M17 family. Homohexamer. Mn(2+) is required as a cofactor.

The protein localises to the cytoplasm. It catalyses the reaction Release of an N-terminal amino acid, Xaa, from a peptide or arylamide. Xaa is preferably Glu or Asp but may be other amino acids, including Leu, Met, His, Cys and Gln.. Functionally, probably plays an important role in intracellular peptide degradation. The polypeptide is Peptidase B (Escherichia coli (strain SMS-3-5 / SECEC)).